Here is a 382-residue protein sequence, read N- to C-terminus: Carbamoyl phosphate synthase small chain (382 aa).

Positions 1–189 (MIKSALLVLE…GLPEAKSEDD (189 aa)) are CPSase. L-glutamine is bound by residues Ser-47 and Gly-241. The region spanning 193-380 (HVVAYDFGAK…IELIKHYRSS (188 aa)) is the Glutamine amidotransferase type-1 domain. Cys-269 functions as the Nucleophile in the catalytic mechanism. Leu-270, Gln-273, Asn-311, Gly-313, and Phe-314 together coordinate L-glutamine. Active-site residues include His-353 and Glu-355.

This sequence belongs to the CarA family. Composed of two chains; the small (or glutamine) chain promotes the hydrolysis of glutamine to ammonia, which is used by the large (or ammonia) chain to synthesize carbamoyl phosphate. Tetramer of heterodimers (alpha,beta)4.

It carries out the reaction hydrogencarbonate + L-glutamine + 2 ATP + H2O = carbamoyl phosphate + L-glutamate + 2 ADP + phosphate + 2 H(+). The enzyme catalyses L-glutamine + H2O = L-glutamate + NH4(+). It functions in the pathway amino-acid biosynthesis; L-arginine biosynthesis; carbamoyl phosphate from bicarbonate: step 1/1. It participates in pyrimidine metabolism; UMP biosynthesis via de novo pathway; (S)-dihydroorotate from bicarbonate: step 1/3. Small subunit of the glutamine-dependent carbamoyl phosphate synthetase (CPSase). CPSase catalyzes the formation of carbamoyl phosphate from the ammonia moiety of glutamine, carbonate, and phosphate donated by ATP, constituting the first step of 2 biosynthetic pathways, one leading to arginine and/or urea and the other to pyrimidine nucleotides. The small subunit (glutamine amidotransferase) binds and cleaves glutamine to supply the large subunit with the substrate ammonia. In Salmonella typhi, this protein is Carbamoyl phosphate synthase small chain.